A 481-amino-acid chain; its full sequence is Calcium uptake protein 1, mitochondrial (481 aa).

The transit peptide at 1-33 (MFRLHSLSALAELAVGSRCYHGGSQPTQMKRRL) directs the protein to the mitochondrion. Positions 58–82 (ESPPSVNNPKSELGDKGKNKDEGEV) are disordered. Positions 69–82 (ELGDKGKNKDEGEV) are enriched in basic and acidic residues. The segment at 101 to 112 (KKKKRSGFRDRK) is polybasic region. Position 124 is a phosphoserine (serine 124). The k/R-ring stretch occupies residues 128–131 (KIFR). An EF-hand 1 domain is found at 220 to 255 (TPQRNFEIAFKMFDLNGDGEVDMEEFEQASCPGNII). Aspartate 233, asparagine 235, aspartate 237, glutamate 239, and glutamate 244 together coordinate Ca(2+). Residues 264 to 268 (RHRDR) are k/R-ring. One can recognise an EF-hand 2 domain in the interval 413–448 (LSDHVCDVVFALFDCDGNGELSNKEFVSIMKQRLMR). Positions 426, 428, 430, 432, and 437 each coordinate Ca(2+). Arginine 460 is modified (asymmetric dimethylarginine). Positions 460–470 (RLMQAMWKCAQ) are C-helix region.

This sequence belongs to the MICU1 family. MICU1 subfamily. As to quaternary structure, heterodimer; disulfide-linked; heterodimerizes with MICU2 or MICU3. Homodimer; disulfide-linked. Component of the uniplex complex, composed of MCU, EMRE/SMDT1, MICU1 and MICU2 (or MICU3) in a 4:4:1:1 stoichiometry. The composition of calcium sensors within the uniplex complex can differ depending on tissues: a MICU1 homodimer can be present instead of the MICU1-MICU2 heterodimer in skeletal-muscle and kidney. MICU1 is recruited to the uniplex complex by EMRE/SMDT1, and it associates with MCU at low calcium levels, occluding the pore of the MCU channel. Associates with the MICOS complex. Interacts with SLC25A23. Interacts with CHCHD4/MIA40; which introduces the interchain disulfide bond with MICU2. Interacts (when methylated) with UCP2; leading to decrease the calcium sensitivity of MICU1. Post-translationally, phosphorylation at Ser-124 by AKT1 impairs its maturation and stability. Asymmetric dimethylation at Arg-460 by PRMT1 decreases the calcium sensitivity of MICU1 by promoting interaction with UCP2. In terms of processing, degraded by YME1L1 when not complexed as homodimer or heterodimer. Not degraded when complexed as homodimer or heterodimer; the presence of the interchain disulfide bond protecting MICU1 from degradation by YME1L1.

The protein resides in the mitochondrion intermembrane space. Its subcellular location is the mitochondrion inner membrane. In terms of biological role, calcium sensor of the mitochondrial calcium uniporter (MCU) channel, which senses calcium level via its EF-hand domains. MICU1 and MICU2 (or MICU3) form a disulfide-linked heterodimer that stimulates and inhibits MCU activity, depending on the concentration of calcium. At low calcium levels, MICU1 occludes the pore of the MCU channel, preventing mitochondrial calcium uptake. At higher calcium levels, calcium-binding to MICU1 and MICU2 (or MICU3) induces a conformational change that weakens MCU-MICU1 interactions and moves the MICU1-MICU2 heterodimer away from the pore, allowing calcium permeation through the MCU channel. Also required to protect against manganese toxicity by preventing manganese uptake by MCU: mechanistically, manganese-binding to its EF-hand domains does not induce any conformational change, maintaining MCU pore occlusion. Acts as a regulator of mitochondrial cristae structure independently of its ability to regulate the mitochondrial calcium uniporter channel. Regulates glucose-dependent insulin secretion in pancreatic beta-cells by regulating mitochondrial calcium uptake. Induces T-helper 1-mediated autoreactivity, which is accompanied by the release of IFNG. This chain is Calcium uptake protein 1, mitochondrial (MICU1), found in Ailuropoda melanoleuca (Giant panda).